The sequence spans 156 residues: ATP synthase subunit b (156 aa).

Residues 7–29 (LFAQMVVFLVLAWFTMKFVWPPL) traverse the membrane as a helical segment.

This sequence belongs to the ATPase B chain family. As to quaternary structure, F-type ATPases have 2 components, F(1) - the catalytic core - and F(0) - the membrane proton channel. F(1) has five subunits: alpha(3), beta(3), gamma(1), delta(1), epsilon(1). F(0) has three main subunits: a(1), b(2) and c(10-14). The alpha and beta chains form an alternating ring which encloses part of the gamma chain. F(1) is attached to F(0) by a central stalk formed by the gamma and epsilon chains, while a peripheral stalk is formed by the delta and b chains.

Its subcellular location is the cell inner membrane. Functionally, f(1)F(0) ATP synthase produces ATP from ADP in the presence of a proton or sodium gradient. F-type ATPases consist of two structural domains, F(1) containing the extramembraneous catalytic core and F(0) containing the membrane proton channel, linked together by a central stalk and a peripheral stalk. During catalysis, ATP synthesis in the catalytic domain of F(1) is coupled via a rotary mechanism of the central stalk subunits to proton translocation. In terms of biological role, component of the F(0) channel, it forms part of the peripheral stalk, linking F(1) to F(0). The protein is ATP synthase subunit b of Burkholderia cenocepacia (strain ATCC BAA-245 / DSM 16553 / LMG 16656 / NCTC 13227 / J2315 / CF5610) (Burkholderia cepacia (strain J2315)).